The primary structure comprises 440 residues: tRNA(Ile)-lysidine synthase (440 aa).

Residue 25 to 30 (SGGVDS) coordinates ATP.

Belongs to the tRNA(Ile)-lysidine synthase family.

The protein resides in the cytoplasm. The enzyme catalyses cytidine(34) in tRNA(Ile2) + L-lysine + ATP = lysidine(34) in tRNA(Ile2) + AMP + diphosphate + H(+). Ligates lysine onto the cytidine present at position 34 of the AUA codon-specific tRNA(Ile) that contains the anticodon CAU, in an ATP-dependent manner. Cytidine is converted to lysidine, thus changing the amino acid specificity of the tRNA from methionine to isoleucine. The protein is tRNA(Ile)-lysidine synthase of Vibrio cholerae serotype O1 (strain ATCC 39315 / El Tor Inaba N16961).